Consider the following 141-residue polypeptide: 16 kDa protein (141 aa).

The tract at residues 100–119 is disordered; it reads TVKKSRNSKPSKKKFKERKE. Basic residues predominate over residues 102–115; the sequence is KKSRNSKPSKKKFK.

The protein is 16 kDa protein of Tobacco rattle virus (strain PLB).